The chain runs to 209 residues: Ribosomal RNA large subunit methyltransferase E (209 aa).

5 residues coordinate S-adenosyl-L-methionine: Gly-63, Trp-65, Asp-83, Asp-99, and Asp-124. Lys-164 (proton acceptor) is an active-site residue.

It belongs to the class I-like SAM-binding methyltransferase superfamily. RNA methyltransferase RlmE family.

The protein resides in the cytoplasm. It carries out the reaction uridine(2552) in 23S rRNA + S-adenosyl-L-methionine = 2'-O-methyluridine(2552) in 23S rRNA + S-adenosyl-L-homocysteine + H(+). Functionally, specifically methylates the uridine in position 2552 of 23S rRNA at the 2'-O position of the ribose in the fully assembled 50S ribosomal subunit. This Yersinia enterocolitica serotype O:8 / biotype 1B (strain NCTC 13174 / 8081) protein is Ribosomal RNA large subunit methyltransferase E.